Consider the following 138-residue polypeptide: ATP synthase epsilon chain (138 aa).

This sequence belongs to the ATPase epsilon chain family. As to quaternary structure, F-type ATPases have 2 components, CF(1) - the catalytic core - and CF(0) - the membrane proton channel. CF(1) has five subunits: alpha(3), beta(3), gamma(1), delta(1), epsilon(1). CF(0) has three main subunits: a, b and c.

The protein localises to the cell inner membrane. Its function is as follows. Produces ATP from ADP in the presence of a proton gradient across the membrane. The polypeptide is ATP synthase epsilon chain (Cupriavidus pinatubonensis (strain JMP 134 / LMG 1197) (Cupriavidus necator (strain JMP 134))).